A 314-amino-acid chain; its full sequence is tRNA uridine(34) hydroxylase (314 aa).

The Rhodanese domain maps to 135–229; sequence SDPDTIVIDT…YLEEVPEEES (95 aa). C189 (cysteine persulfide intermediate) is an active-site residue.

The protein belongs to the TrhO family.

It carries out the reaction uridine(34) in tRNA + AH2 + O2 = 5-hydroxyuridine(34) in tRNA + A + H2O. Catalyzes oxygen-dependent 5-hydroxyuridine (ho5U) modification at position 34 in tRNAs. The protein is tRNA uridine(34) hydroxylase of Agrobacterium fabrum (strain C58 / ATCC 33970) (Agrobacterium tumefaciens (strain C58)).